Consider the following 99-residue polypeptide: MADALGMIEVRGFVGMVEAADAMVKAAKVELIGYEKTGGGYVTAVVRGDVAAVKAATEAGQRAAERVGEVVAVHVIPRPHVNVDAALPLGRTPGMDKSA.

One can recognise a BMC domain in the interval 4-88 (ALGMIEVRGF…PHVNVDAALP (85 aa)).

It belongs to the bacterial microcompartments protein family. As to quaternary structure, homohexamer with a small central pore. When purified protein is examined by atomic force microscopy it dynamically makes uniform patches about 35 Angstroms thick with hexamers in the same orientation. In the BMC the concave side faces outward, with the N- and C-terminii exposed to the cytoplasm.

Its subcellular location is the bacterial microcompartment. Its function is as follows. The only hexameric shell protein in this bacterium, it forms the majority of the bacterial microcompartment (BMC) shell. Expression of 5 proteins in E.coli (BMC-H (Hoch_5815), BMC-P (Hoch_5814), and 3 BMC-T (Hoch_5812, Hoch_5816, Hoch_3341)) forms a 40 nm artificial BMC with a molecular mass of 6.5 MDa. There are 60 BMC-H hexamers per BMC. The shell facets are 20-30 Angstroms thick (a single hexamer layer), with 1 of BMC-T trimers protruding to the exterior. In Haliangium ochraceum (strain DSM 14365 / JCM 11303 / SMP-2), this protein is Bacterial microcompartment protein homohexamer.